Consider the following 1178-residue polypeptide: Dual specificity mitogen-activated protein kinase kinase hemipterous (1178 aa).

2 disordered regions span residues 74-103 (SGSG…SSSS) and 115-148 (ATGT…GGGL). 2 stretches are compositionally biased toward low complexity: residues 91 to 103 (ATPF…SSSS) and 115 to 128 (ATGT…PPTT). Residues 197 to 456 (LKHLGDLGNG…YPELLAQPFI (260 aa)) enclose the Protein kinase domain. ATP is bound by residues 203–211 (LGNGTSGNV) and Lys226. Asp320 acts as the Proton acceptor in catalysis. The residue at position 348 (Ser348) is a Phosphoserine. Thr352 carries the phosphothreonine modification. Residues 522-648 (TYAGQSPTNP…DESPKKESMF (127 aa)) form a disordered region. The span at 523-543 (YAGQSPTNPQKTIKPTQIPSY) shows a compositional bias: polar residues. A compositionally biased stretch (low complexity) spans 544 to 570 (QQQQSQFFMQSATQLPQTTTTTPTATT). The span at 574–593 (GGSGNGNGRGNGSGGSGNGS) shows a compositional bias: gly residues. The span at 594–608 (GSSSSASPLSPPSAG) shows a compositional bias: low complexity. Residues 636 to 646 (KYNDESPKKES) are compositionally biased toward basic and acidic residues. Ser646 and Ser662 each carry phosphoserine. Disordered stretches follow at residues 715–783 (TTTP…LQPG), 797–851 (QNQL…STCS), 912–933 (GTSP…GNGN), 999–1026 (TSPV…VVNN), 1042–1108 (SSSS…NRGQ), and 1122–1178 (GQPP…TIDQ). Positions 724-734 (TENSQAYDSCD) are enriched in polar residues. Low complexity-rich tracts occupy residues 735 to 783 (SSSN…LQPG), 808 to 817 (RYQQQRQQPP), and 837 to 851 (THST…STCS). Over residues 912 to 928 (GTSPTLQSRSPEQQSDY) the composition is skewed to polar residues. Positions 1042–1055 (SSSSNTSQSTSPTT) are enriched in low complexity. A phosphoserine mark is found at Ser1150 and Ser1154. Positions 1168-1178 (PQRRIYRTIDQ) are enriched in basic and acidic residues.

Belongs to the protein kinase superfamily. STE Ser/Thr protein kinase family. MAP kinase kinase subfamily. MAPKK is itself dependent on Ser/Thr phosphorylation for activity catalyzed by MAP kinase kinase kinases. In terms of processing, weakly autophosphorylated.

The catalysed reaction is L-seryl-[protein] + ATP = O-phospho-L-seryl-[protein] + ADP + H(+). It carries out the reaction L-threonyl-[protein] + ATP = O-phospho-L-threonyl-[protein] + ADP + H(+). It catalyses the reaction L-tyrosyl-[protein] + ATP = O-phospho-L-tyrosyl-[protein] + ADP + H(+). Functionally, required for the epithelial cell sheet movement called dorsal closure (DC), which allows establishment of the dorsal epidermis. Controls the expression in the dorsal epithelium edges of another dorsal closure gene, puckered (puc). Phosphorylates and activates the MAP kinase bsk; bsk signal transduction pathway mediates an immune response and morphogenesis. This chain is Dual specificity mitogen-activated protein kinase kinase hemipterous (hep), found in Drosophila melanogaster (Fruit fly).